Reading from the N-terminus, the 653-residue chain is Threonine--tRNA ligase (653 aa).

One can recognise a TGS domain in the interval 1–61 (MIKITFPDGN…NEDAEVKLFK (61 aa)). Positions 243 to 542 (DHRKIGKELE…LIEHTAGKFP (300 aa)) are catalytic. Zn(2+)-binding residues include C338, H389, and H519.

Belongs to the class-II aminoacyl-tRNA synthetase family. As to quaternary structure, homodimer. Requires Zn(2+) as cofactor.

The protein localises to the cytoplasm. The enzyme catalyses tRNA(Thr) + L-threonine + ATP = L-threonyl-tRNA(Thr) + AMP + diphosphate + H(+). Functionally, catalyzes the attachment of threonine to tRNA(Thr) in a two-step reaction: L-threonine is first activated by ATP to form Thr-AMP and then transferred to the acceptor end of tRNA(Thr). Also edits incorrectly charged L-seryl-tRNA(Thr). The protein is Threonine--tRNA ligase of Porphyromonas gingivalis (strain ATCC 33277 / DSM 20709 / CIP 103683 / JCM 12257 / NCTC 11834 / 2561).